Here is a 375-residue protein sequence, read N- to C-terminus: MNFSKLKFGATIGIIGGGQLGKMMAQSAQKMGYKVIVLDPNEDCPCRYVAHQFIHANYDDEQALNQLGENSDVVTYEFENISSEQLKKLTQLYHIPQGYQAIELLQDRLTEKQTLLEANTQIVPFVQIQTNQDLLKAIEKLGFPFIVKTRFGGYDGKGQILVRNDSELDEAYQLVEKQECVAEQYLDIQKEVSLTVTIGNEQQTTYFPLQENEHQNQILFKTVVPARSDKENEARKEVEKITRAIHFVGTFTVEFFIDKENNLYVNEIAPRPHNSGHYSIEACDYSQFDTHILAITGQKLPQAIELLKPTVMMNLLGRDLDLLENEFSRHPDWHIHIYGKKERKPDRKMGHMTLLTDDVNQTEQYMLMKFEGRDK.

ATP contacts are provided by residues Arg108, Lys148, 153-159 (GYDGKGQ), 183-186 (EQYL), Glu191, His214, and 266-267 (NE). An ATP-grasp domain is found at 112 to 296 (KQTLLEANTQ…QFDTHILAIT (185 aa)).

This sequence belongs to the PurK/PurT family. As to quaternary structure, homodimer.

The catalysed reaction is 5-amino-1-(5-phospho-beta-D-ribosyl)imidazole + hydrogencarbonate + ATP = 5-carboxyamino-1-(5-phospho-D-ribosyl)imidazole + ADP + phosphate + 2 H(+). The protein operates within purine metabolism; IMP biosynthesis via de novo pathway; 5-amino-1-(5-phospho-D-ribosyl)imidazole-4-carboxylate from 5-amino-1-(5-phospho-D-ribosyl)imidazole (N5-CAIR route): step 1/2. Catalyzes the ATP-dependent conversion of 5-aminoimidazole ribonucleotide (AIR) and HCO(3)(-) to N5-carboxyaminoimidazole ribonucleotide (N5-CAIR). The protein is N5-carboxyaminoimidazole ribonucleotide synthase of Staphylococcus epidermidis (strain ATCC 12228 / FDA PCI 1200).